The chain runs to 153 residues: Aspartate carbamoyltransferase regulatory chain (153 aa).

The Zn(2+) site is built by Cys109, Cys114, Cys138, and Cys141.

Belongs to the PyrI family. As to quaternary structure, contains catalytic and regulatory chains. It depends on Zn(2+) as a cofactor.

In terms of biological role, involved in allosteric regulation of aspartate carbamoyltransferase. This Vibrio campbellii (strain ATCC BAA-1116) protein is Aspartate carbamoyltransferase regulatory chain.